Consider the following 364-residue polypeptide: Ribosomal RNA large subunit methyltransferase F (364 aa).

Residues 1–17 are compositionally biased toward low complexity; it reads MPKPAIKTAAKPATSSA. Positions 1 to 53 are disordered; it reads MPKPAIKTAAKPATSSAGKRGKPNTPKSVAKPKTAKPKTASKPKVKPGEKKRL. A compositionally biased stretch (basic residues) spans 33-53; sequence KTAKPKTASKPKVKPGEKKRL.

The protein belongs to the methyltransferase superfamily. METTL16/RlmF family.

It localises to the cytoplasm. It carries out the reaction adenosine(1618) in 23S rRNA + S-adenosyl-L-methionine = N(6)-methyladenosine(1618) in 23S rRNA + S-adenosyl-L-homocysteine + H(+). Specifically methylates the adenine in position 1618 of 23S rRNA. This is Ribosomal RNA large subunit methyltransferase F from Shewanella sp. (strain MR-7).